The sequence spans 340 residues: Holliday junction branch migration complex subunit RuvB (340 aa).

The large ATPase domain (RuvB-L) stretch occupies residues 4-184; it reads TDRIVGGQSL…FGIVQRLEFY (181 aa). ATP-binding positions include Arg-24, Gly-65, Lys-68, Thr-69, Thr-70, 131–133, Arg-174, Tyr-184, and Arg-221; that span reads EDF. Position 69 (Thr-69) interacts with Mg(2+). The small ATPAse domain (RuvB-S) stretch occupies residues 185-255; it reads SIEELAQIVT…IADLALNLLE (71 aa). Positions 258 to 340 are head domain (RuvB-H); the sequence is PLGLDKMDRR…TMPERNLEDE (83 aa). DNA contacts are provided by Arg-294, Arg-313, and Arg-318.

It belongs to the RuvB family. Homohexamer. Forms an RuvA(8)-RuvB(12)-Holliday junction (HJ) complex. HJ DNA is sandwiched between 2 RuvA tetramers; dsDNA enters through RuvA and exits via RuvB. An RuvB hexamer assembles on each DNA strand where it exits the tetramer. Each RuvB hexamer is contacted by two RuvA subunits (via domain III) on 2 adjacent RuvB subunits; this complex drives branch migration. In the full resolvosome a probable DNA-RuvA(4)-RuvB(12)-RuvC(2) complex forms which resolves the HJ.

The protein localises to the cytoplasm. The catalysed reaction is ATP + H2O = ADP + phosphate + H(+). The RuvA-RuvB-RuvC complex processes Holliday junction (HJ) DNA during genetic recombination and DNA repair, while the RuvA-RuvB complex plays an important role in the rescue of blocked DNA replication forks via replication fork reversal (RFR). RuvA specifically binds to HJ cruciform DNA, conferring on it an open structure. The RuvB hexamer acts as an ATP-dependent pump, pulling dsDNA into and through the RuvAB complex. RuvB forms 2 homohexamers on either side of HJ DNA bound by 1 or 2 RuvA tetramers; 4 subunits per hexamer contact DNA at a time. Coordinated motions by a converter formed by DNA-disengaged RuvB subunits stimulates ATP hydrolysis and nucleotide exchange. Immobilization of the converter enables RuvB to convert the ATP-contained energy into a lever motion, pulling 2 nucleotides of DNA out of the RuvA tetramer per ATP hydrolyzed, thus driving DNA branch migration. The RuvB motors rotate together with the DNA substrate, which together with the progressing nucleotide cycle form the mechanistic basis for DNA recombination by continuous HJ branch migration. Branch migration allows RuvC to scan DNA until it finds its consensus sequence, where it cleaves and resolves cruciform DNA. This Hydrogenovibrio crunogenus (strain DSM 25203 / XCL-2) (Thiomicrospira crunogena) protein is Holliday junction branch migration complex subunit RuvB.